The sequence spans 145 residues: Basic phospholipase A2 PC14 (145 aa).

A signal peptide spans 1–21 (MYPAHLLLLLAVCVSLLGASA). Positions 22–27 (IPPLPL) are excised as a propeptide. 7 disulfide bridges follow: Cys-38-Cys-98, Cys-54-Cys-144, Cys-56-Cys-72, Cys-71-Cys-125, Cys-78-Cys-118, Cys-87-Cys-111, and Cys-105-Cys-116. Ca(2+) contacts are provided by Tyr-55, Gly-57, and Gly-59. His-75 is a catalytic residue. Asp-76 contributes to the Ca(2+) binding site. Asp-119 is an active-site residue.

This sequence belongs to the phospholipase A2 family. Group I subfamily. D49 sub-subfamily. The cofactor is Ca(2+).

The protein localises to the secreted. It catalyses the reaction a 1,2-diacyl-sn-glycero-3-phosphocholine + H2O = a 1-acyl-sn-glycero-3-phosphocholine + a fatty acid + H(+). PLA2 catalyzes the calcium-dependent hydrolysis of the 2-acyl groups in 3-sn-phosphoglycerides. This Laticauda laticaudata (Blue-ringed sea krait) protein is Basic phospholipase A2 PC14.